A 232-amino-acid polypeptide reads, in one-letter code: Ribose-5-phosphate isomerase A (232 aa).

Substrate is bound by residues 31–34 (TGST), 87–90 (DGAD), and 100–103 (KGGG). Glu109 serves as the catalytic Proton acceptor. Lys127 provides a ligand contact to substrate.

This sequence belongs to the ribose 5-phosphate isomerase family. In terms of assembly, homodimer.

The catalysed reaction is aldehydo-D-ribose 5-phosphate = D-ribulose 5-phosphate. It participates in carbohydrate degradation; pentose phosphate pathway; D-ribose 5-phosphate from D-ribulose 5-phosphate (non-oxidative stage): step 1/1. Functionally, catalyzes the reversible conversion of ribose-5-phosphate to ribulose 5-phosphate. The sequence is that of Ribose-5-phosphate isomerase A from Bifidobacterium longum (strain DJO10A).